Consider the following 102-residue polypeptide: uncharacterized protein (102 aa).

Transmembrane regions (helical) follow at residues 33-55 (VLELLTIISGLVVTLVLVVLVVL) and 57-79 (VVGVVVLVVLLVVVVLLCDVVVA).

The protein resides in the membrane. This is an uncharacterized protein from Saccharomyces cerevisiae (strain ATCC 204508 / S288c) (Baker's yeast).